A 538-amino-acid chain; its full sequence is Putative cysteine ligase BshC (538 aa).

The stretch at 454–482 (LEKNAGFIQDQLQFLEKTVIRRIEEKENY) forms a coiled coil.

Belongs to the BshC family.

In terms of biological role, involved in bacillithiol (BSH) biosynthesis. May catalyze the last step of the pathway, the addition of cysteine to glucosamine malate (GlcN-Mal) to generate BSH. The protein is Putative cysteine ligase BshC of Bacillus licheniformis (strain ATCC 14580 / DSM 13 / JCM 2505 / CCUG 7422 / NBRC 12200 / NCIMB 9375 / NCTC 10341 / NRRL NRS-1264 / Gibson 46).